Reading from the N-terminus, the 308-residue chain is Aspartate carbamoyltransferase catalytic subunit (308 aa).

The carbamoyl phosphate site is built by arginine 58 and threonine 59. Lysine 86 serves as a coordination point for L-aspartate. Carbamoyl phosphate-binding residues include arginine 108, histidine 136, and glutamine 139. L-aspartate-binding residues include arginine 169 and arginine 222. Carbamoyl phosphate contacts are provided by glycine 264 and proline 265.

The protein belongs to the aspartate/ornithine carbamoyltransferase superfamily. ATCase family. As to quaternary structure, heterododecamer (2C3:3R2) of six catalytic PyrB chains organized as two trimers (C3), and six regulatory PyrI chains organized as three dimers (R2).

The enzyme catalyses carbamoyl phosphate + L-aspartate = N-carbamoyl-L-aspartate + phosphate + H(+). It participates in pyrimidine metabolism; UMP biosynthesis via de novo pathway; (S)-dihydroorotate from bicarbonate: step 2/3. Catalyzes the condensation of carbamoyl phosphate and aspartate to form carbamoyl aspartate and inorganic phosphate, the committed step in the de novo pyrimidine nucleotide biosynthesis pathway. The sequence is that of Aspartate carbamoyltransferase catalytic subunit from Campylobacter hominis (strain ATCC BAA-381 / DSM 21671 / CCUG 45161 / LMG 19568 / NCTC 13146 / CH001A).